A 44-amino-acid chain; its full sequence is uncharacterized protein (44 aa).

A disordered region spans residues 22-44; sequence LNSAPAFKSSQNTSTQAKPTFSN.

This is an uncharacterized protein from Dictyostelium discoideum (Social amoeba).